Reading from the N-terminus, the 397-residue chain is Izumo sperm-egg fusion protein 1 (397 aa).

A signal peptide spans 1-21 (MGPHFTLLLAALANCLCPGRP). Disulfide bonds link Cys22–Cys149, Cys25–Cys152, Cys135–Cys159, Cys139–Cys165, and Cys182–Cys233. At 22–319 (CIKCDQFVTD…QNPEKKMKTR (298 aa)) the chain is on the extracellular side. Residues 148–160 (WCLKCEKQLHICR) are important for interaction with IZUMO1R. An Ig-like C2-type domain is found at 167 to 251 (ERHIEVHRSE…HATVIRYDVT (85 aa)). A glycan (N-linked (GlcNAc...) asparagine) is linked at Asn204. The disordered stretch occupies residues 271–292 (EHETPVHVTPQTPPGQEPESEL). A helical transmembrane segment spans residues 320–340 (LLILLTLGFVVLVASIIISVL). Residues 341–397 (HFRKVSAKLKNASDEVKPTASGSKSDQSLSQQMGLKKASQADFNSDYSGDKSEATEN) lie on the Cytoplasmic side of the membrane. The segment at 351–397 (NASDEVKPTASGSKSDQSLSQQMGLKKASQADFNSDYSGDKSEATEN) is disordered. Polar residues predominate over residues 360–373 (ASGSKSDQSLSQQM). Ser379 is subject to Phosphoserine. Over residues 388–397 (SGDKSEATEN) the composition is skewed to basic and acidic residues.

It belongs to the Izumo family. As to quaternary structure, monomer, homodimer; disulfide-linked and homooligomer; depending on the context. Interacts with IZUMO1R/JUNO. IZUMO1 and IZUMO1R/JUNO form a complex with 1:1 stoichiometry. In gamete recognition, IZUMO1R/JUNO first binds to monomeric IZUMO1. The weak, but specific interaction with IZUMO1R/JUNO induces IZUMO1 homodimerization. The process follows a tight binding phase where IZUMO1 bends the entire structure towards the sperm membrane side through a thiol-disulfide exchange reaction. The molecule no longer binds to IZUMO1R/JUNO and instead binds to a putative second oocyte receptor. Interacts with ACE3. Part of a oolemmal binding multimeric complex (IZUMO1 complex) composed at least of IZUMO1 and GLIPR1L1; the complex assemblage is influenced by the maturation status of the male germ cell. Interacts with GLIPR1L1. Interacts with FREY; the interaction retains IZUMO1 at the endoplasmic reticulum membrane and coordinates IZUMO1 complex assembly. Interacts with WDR54. Forms a complex with SPACA6 and TMEM81 on spermatocyte cell membrane. Post-translationally, N-glycosylated. Glycosylation is not essential for fusion and for proper protein trafficking in sperm. In terms of processing, phosphorylated. The cytoplasmic C-terminus is phosphorylated and undergoes phosphorylation changes during epididymal transit. As to expression, sperm-specific (at protein level). Detectable on sperm surface only after the acrosome reaction. Expressed in spermatozoa, more abundantly expressed in the head than the tail (at protein level).

The protein resides in the cell membrane. Its subcellular location is the cytoplasmic vesicle. It localises to the secretory vesicle. It is found in the acrosome membrane. In terms of biological role, essential sperm cell-surface protein required for fertilization by acting as a ligand for IZUMO1R/JUNO receptor on egg. The IZUMO1:IZUMO1R/JUNO interaction is a necessary adhesion event between sperm and egg that is required for fertilization but is not sufficient for cell fusion. The ligand-receptor interaction probably does not act as a membrane 'fusogen'. Plays a critical role in sperm-oolemma binding prior to plasma membrane fusion. Can mediate cell-cell fusion in cultured mammalian cells independently of its binding to IZUMO1R/JUNO. This Mus musculus (Mouse) protein is Izumo sperm-egg fusion protein 1.